Reading from the N-terminus, the 461-residue chain is Bifunctional protein GlmU (461 aa).

Residues 1 to 227 (MEVIALILAA…PDEVLGVNDR (227 aa)) are pyrophosphorylase. UDP-N-acetyl-alpha-D-glucosamine is bound by residues 8–11 (LAAG), lysine 22, glutamine 73, 78–79 (GT), 100–102 (YGD), glycine 137, glutamate 152, asparagine 167, and asparagine 225. Mg(2+) is bound at residue aspartate 102. Position 225 (asparagine 225) interacts with Mg(2+). The segment at 228 to 248 (RQLAELERIYQVHQARALMER) is linker. Residues 249–461 (GVTLRDPARF…EKARKESCAE (213 aa)) are N-acetyltransferase. Arginine 332 and lysine 350 together coordinate UDP-N-acetyl-alpha-D-glucosamine. Residue histidine 362 is the Proton acceptor of the active site. Positions 365 and 376 each coordinate UDP-N-acetyl-alpha-D-glucosamine. Residues alanine 379, 385–386 (NY), serine 404, alanine 422, and arginine 439 contribute to the acetyl-CoA site.

This sequence in the N-terminal section; belongs to the N-acetylglucosamine-1-phosphate uridyltransferase family. In the C-terminal section; belongs to the transferase hexapeptide repeat family. In terms of assembly, homotrimer. Mg(2+) serves as cofactor.

The protein localises to the cytoplasm. The enzyme catalyses alpha-D-glucosamine 1-phosphate + acetyl-CoA = N-acetyl-alpha-D-glucosamine 1-phosphate + CoA + H(+). It carries out the reaction N-acetyl-alpha-D-glucosamine 1-phosphate + UTP + H(+) = UDP-N-acetyl-alpha-D-glucosamine + diphosphate. The protein operates within nucleotide-sugar biosynthesis; UDP-N-acetyl-alpha-D-glucosamine biosynthesis; N-acetyl-alpha-D-glucosamine 1-phosphate from alpha-D-glucosamine 6-phosphate (route II): step 2/2. It functions in the pathway nucleotide-sugar biosynthesis; UDP-N-acetyl-alpha-D-glucosamine biosynthesis; UDP-N-acetyl-alpha-D-glucosamine from N-acetyl-alpha-D-glucosamine 1-phosphate: step 1/1. It participates in bacterial outer membrane biogenesis; LPS lipid A biosynthesis. Functionally, catalyzes the last two sequential reactions in the de novo biosynthetic pathway for UDP-N-acetylglucosamine (UDP-GlcNAc). The C-terminal domain catalyzes the transfer of acetyl group from acetyl coenzyme A to glucosamine-1-phosphate (GlcN-1-P) to produce N-acetylglucosamine-1-phosphate (GlcNAc-1-P), which is converted into UDP-GlcNAc by the transfer of uridine 5-monophosphate (from uridine 5-triphosphate), a reaction catalyzed by the N-terminal domain. The chain is Bifunctional protein GlmU from Methylococcus capsulatus (strain ATCC 33009 / NCIMB 11132 / Bath).